The primary structure comprises 152 residues: Deoxyuridine 5'-triphosphate nucleotidohydrolase (152 aa).

Substrate contacts are provided by residues 71–73 (RSG), Asn84, 88–90 (LID), and Met98.

This sequence belongs to the dUTPase family. It depends on Mg(2+) as a cofactor.

The enzyme catalyses dUTP + H2O = dUMP + diphosphate + H(+). It functions in the pathway pyrimidine metabolism; dUMP biosynthesis; dUMP from dCTP (dUTP route): step 2/2. In terms of biological role, this enzyme is involved in nucleotide metabolism: it produces dUMP, the immediate precursor of thymidine nucleotides and it decreases the intracellular concentration of dUTP so that uracil cannot be incorporated into DNA. In Citrobacter koseri (strain ATCC BAA-895 / CDC 4225-83 / SGSC4696), this protein is Deoxyuridine 5'-triphosphate nucleotidohydrolase.